The primary structure comprises 896 residues: Glutamate receptor 2.4 (896 aa).

A signal peptide spans 1–24 (MKRHLNDVVLVFLVFIFGVKLGKG). Over 25–565 (QNTTIQVINV…SSLIFFKPLT (541 aa)) the chain is Extracellular. N-linked (GlcNAc...) asparagine glycans are attached at residues Asn26, Asn46, Asn53, Asn204, Asn267, Asn331, Asn341, and Asn527. Residues 566-586 (PGLWGMTLGSFFVVGFVVWIL) traverse the membrane as a helical segment. Over 587-595 (EHRVNSEFT) the chain is Cytoplasmic. Residues 596-616 (GPPQYQISTMFWFAFSIMVFA) traverse the membrane as a helical segment. Residues 617 to 620 (PRER) lie on the Cytoplasmic side of the membrane. A helical transmembrane segment spans residues 621-641 (VMSFTARVVVITWYFIVLVLT). The Extracellular segment spans residues 642 to 815 (QSYTASLSSL…VSFRKLSLDS (174 aa)). A helical membrane pass occupies residues 816-836 (FLLLFVAAATVCTLALLKFVI). Topologically, residues 837-896 (CFLIQNRIILNDEFYRGKRMKEMWLKFMESDGESYISRVRSTCPQVLIQPREEDIDPING) are cytoplasmic.

Belongs to the glutamate-gated ion channel (TC 1.A.10.1) family. May form heteromers. As to expression, expressed predominantly in roots.

The protein localises to the membrane. Its function is as follows. Glutamate-gated receptor that probably acts as a non-selective cation channel. May be involved in light-signal transduction and calcium homeostasis via the regulation of calcium influx into cells. This Arabidopsis thaliana (Mouse-ear cress) protein is Glutamate receptor 2.4 (GLR2.4).